The following is a 968-amino-acid chain: Protein translocase subunit SecA (968 aa).

Residues Q86, 104–108 (GEGKT), and D494 contribute to the ATP site. The segment at 835–968 (PAESAEESTD…RAAKAAKKRR (134 aa)) is disordered. 2 stretches are compositionally biased toward low complexity: residues 883–892 (ARVATRPAAE) and 910–923 (SAPSSDGGSSFSEG). Basic residues predominate over residues 956-968 (ARRRAAKAAKKRR).

The protein belongs to the SecA family. In terms of assembly, monomer and homodimer. Part of the essential Sec protein translocation apparatus which comprises SecA, SecYEG and auxiliary proteins SecDF. Other proteins may also be involved.

Its subcellular location is the cell membrane. The protein localises to the cytoplasm. The enzyme catalyses ATP + H2O + cellular proteinSide 1 = ADP + phosphate + cellular proteinSide 2.. Part of the Sec protein translocase complex. Interacts with the SecYEG preprotein conducting channel. Has a central role in coupling the hydrolysis of ATP to the transfer of proteins into and across the cell membrane, serving as an ATP-driven molecular motor driving the stepwise translocation of polypeptide chains across the membrane. The polypeptide is Protein translocase subunit SecA (Beutenbergia cavernae (strain ATCC BAA-8 / DSM 12333 / CCUG 43141 / JCM 11478 / NBRC 16432 / NCIMB 13614 / HKI 0122)).